We begin with the raw amino-acid sequence, 355 residues long: Protein RecA (355 aa).

Position 72-79 (72-79 (GPESSGKT)) interacts with ATP.

It belongs to the RecA family.

It is found in the cytoplasm. Functionally, can catalyze the hydrolysis of ATP in the presence of single-stranded DNA, the ATP-dependent uptake of single-stranded DNA by duplex DNA, and the ATP-dependent hybridization of homologous single-stranded DNAs. It interacts with LexA causing its activation and leading to its autocatalytic cleavage. The polypeptide is Protein RecA (Wolbachia sp. subsp. Drosophila simulans (strain wRi)).